Reading from the N-terminus, the 265-residue chain is Apolipoprotein A-I (265 aa).

The signal sequence occupies residues 1 to 18 (MKAVVLTLAVLFLTGSQA). Repeat copies occupy residues 67–88 (LKLLDNWDSLTSTFAKVREQLG) and 89–110 (PVTREFWDNLEKETESLRQEMN). Residues 67-265 (LKLLDNWDSL…DEASKKLNAQ (199 aa)) are 10 X approximate tandem repeats. M109 bears the Methionine sulfoxide mark. One copy of the 3; half-length repeat lies at 111-121 (KDLQEVKQKVQ). 5 consecutive repeat copies span residues 122 to 142 (PYLDEFQKKWQEELQIYRQKV), 144 to 165 (PLGEELREGARQKVQELQDKLT), 166 to 187 (PLAEEMRDRARAHVETLRQQLA), 188 to 209 (PYSDELRQRMAARFEMLKEGGG), and 210 to 230 (SLVQYHAKASEQLKALGEKAK). Residues 231-241 (PALEDLRQGLL) form a 9; half-length repeat. Repeat unit 10 spans residues 242–265 (PVLENLKVSILAAIDEASKKLNAQ).

The protein belongs to the apolipoprotein A1/A4/E family. As to quaternary structure, homodimer. Interacts with APOA1BP and CLU. Component of a sperm activating protein complex (SPAP), consisting of APOA1, an immunoglobulin heavy chain, an immunoglobulin light chain and albumin. Interacts with NDRG1. Interacts with SCGB3A2. Interacts with NAXE and YJEFN3. Post-translationally, glycosylated. Palmitoylated. In terms of processing, phosphorylation sites are present in the extracellular medium. Major protein of plasma HDL, also found in chylomicrons.

It localises to the secreted. Functionally, participates in the reverse transport of cholesterol from tissues to the liver for excretion by promoting cholesterol efflux from tissues and by acting as a cofactor for the lecithin cholesterol acyltransferase (LCAT). As part of the SPAP complex, activates spermatozoa motility. This Balaenoptera acutorostrata scammoni (North Pacific minke whale) protein is Apolipoprotein A-I (APOA1).